The chain runs to 688 residues: Pentatricopeptide repeat-containing protein At3g18020 (688 aa).

PPR repeat units follow at residues 53–88 (DRAY…GYRP), 89–123 (DSLN…GFIP), 124–158 (DERT…KKEF), 161–195 (SLTN…GHLP), 196–230 (DVVT…GIRP), 231–261 (NSLT…LWEY), 271–305 (KAAA…ESVN), 306–340 (VEFA…GLKP), 341–375 (RRTS…EFFP), 376–406 (SEYT…MLRK), 411–445 (RTRI…DCRP), 446–480 (DEYT…KFCA), 482–517 (DAVT…KIKP), 518–552 (GVVA…SVTA), 553–583 (DSTT…VIWP), 588–622 (DAFV…GAIP), and 623–657 (NVVC…GQAP).

It belongs to the PPR family. P subfamily.

The sequence is that of Pentatricopeptide repeat-containing protein At3g18020 from Arabidopsis thaliana (Mouse-ear cress).